The sequence spans 250 residues: Small ribosomal subunit protein uS2 (250 aa).

Belongs to the universal ribosomal protein uS2 family.

This chain is Small ribosomal subunit protein uS2, found in Polaromonas naphthalenivorans (strain CJ2).